Here is a 425-residue protein sequence, read N- to C-terminus: Pectate lyase L (425 aa).

Residues 1–25 (MKYLNCFISTGLAAFFLVNSTSVLA) form the signal peptide. A disulfide bridge connects residues Cys28 and Cys114. 4 residues coordinate Ca(2+): Asp209, Asp233, Asp234, and Asp237. Lys273 serves as the catalytic Proton acceptor. Asn402, Ser413, Ala416, Asp418, and Glu423 together coordinate Ca(2+).

Belongs to the polysaccharide lyase 9 family. It depends on Ca(2+) as a cofactor.

It localises to the secreted. It carries out the reaction Eliminative cleavage of (1-&gt;4)-alpha-D-galacturonan to give oligosaccharides with 4-deoxy-alpha-D-galact-4-enuronosyl groups at their non-reducing ends.. Its pathway is glycan metabolism; pectin degradation; 2-dehydro-3-deoxy-D-gluconate from pectin: step 2/5. Its function is as follows. Presents an endo-cleaving activity on polygalacturonate or partially methylated pectin. Is effective in the maceration of plant tissue, and has an important role in soft-rot disease. Is 280-fold less active against polygalacturonate than the major pectate lyase PelB. When assayed on polygalacturonate, PelL releases oligogalacturonates of different sizes; upon prolonged incubation, PelL degrades the primary products to unsaturated tetramer and pentamer in addition to unsaturated dimer and trimer. When assayed on oligogalacturonates (degrees of polymerization of 2 to 8), it preferentially forms unsaturated tetramer, and displays the highest activity on the octamer. This is Pectate lyase L (pelL) from Dickeya dadantii (strain 3937) (Erwinia chrysanthemi (strain 3937)).